The sequence spans 251 residues: Osmotin-like protein (251 aa).

The signal sequence occupies residues 1-21 (MSHLTTFLVFFLLAFVTYTYA). Intrachain disulfides connect Cys-31–Cys-226, Cys-73–Cys-83, Cys-88–Cys-94, Cys-142–Cys-214, Cys-147–Cys-197, Cys-155–Cys-165, Cys-169–Cys-178, and Cys-179–Cys-184. A glycan (N-linked (GlcNAc...) asparagine) is linked at Asn-233.

This sequence belongs to the thaumatin family.

The protein is Osmotin-like protein (OLPA) of Nicotiana tabacum (Common tobacco).